Reading from the N-terminus, the 76-residue chain is U1-cyrtautoxin-As1b (76 aa).

Intrachain disulfides connect cysteine 23-cysteine 37, cysteine 30-cysteine 51, cysteine 36-cysteine 66, and cysteine 69-cysteine 76.

This sequence belongs to the neurotoxin 21 family. In terms of tissue distribution, expressed by the venom gland.

Its subcellular location is the secreted. Neurotoxin with probable ion channel impairing activity. Is both paralytic and lethal, when injected into lepidopteran larvae. The sequence is that of U1-cyrtautoxin-As1b from Apomastus schlingeri (Trap-door spider).